The following is a 380-amino-acid chain: Putative glutamate--cysteine ligase 2 (380 aa).

This sequence belongs to the glutamate--cysteine ligase type 2 family. YbdK subfamily.

It carries out the reaction L-cysteine + L-glutamate + ATP = gamma-L-glutamyl-L-cysteine + ADP + phosphate + H(+). Functionally, ATP-dependent carboxylate-amine ligase which exhibits weak glutamate--cysteine ligase activity. The polypeptide is Putative glutamate--cysteine ligase 2 (Pseudomonas entomophila (strain L48)).